The sequence spans 815 residues: MVLRSGICGLSPHRIFPSLLVVVALVGLLPVLRSHGLQLSPTASTIRSSEPPRERSIGDVTTAPPEVTPESRPVNHSVTDHGMKPRKAFPVLGIDYTHVRTPFEISLWILLACLMKIGFHVIPTISSIVPESCLLIVVGLLVGGLIKGVGETPPFLQSDVFFLFLLPPIILDAGYFLPLRQFTENLGTILIFAVVGTLWNAFFLGGLMYAVCLVGGEQINNIGLLDNLLFGSIISAVDPVAVLAVFEEIHINELLHILVFGESLLNDAVTVVLYHLFEEFANYEHVGIVDIFLGFLSFFVVALGGVLVGVVYGVIAAFTSRFTSHIRVIEPLFVFLYSYMAYLSAELFHLSGIMALIASGVVMRPYVEANISHKSHTTIKYFLKMWSSVSETLIFIFLGVSTVAGSHHWNWTFVISTLLFCLIARVLGVLGLTWFINKFRIVKLTPKDQFIIAYGGLRGAIAFSLGYLLDKKHFPMCDLFLTAIITVIFFTVFVQGMTIRPLVDLLAVKKKQETKRSINEEIHTQFLDHLLTGIEDICGHYGHHHWKDKLNRFNKKYVKKCLIAGERSKEPQLIAFYHKMEMKQAIELVESGGMGKIPSAVSTVSMQNIHPKSLPSERILPALSKDKEEEIRKILRNNLQKTRQRLRSYNRHTLVADPYEEAWNQMLLRRQKARQLEQKINNYLTVPAHKLDSPTMSRARIGSDPLAYEPKEDLPVITIDPASPQSPESVDLVNEELKGKVLGLSRDPAKVAEEDEDDDGGIMMRSKETSSPGTDDVFTPAPSDSPSSQRIQRCLSDPGPHPEPGEGEPFFPKGQ.

The Extracellular segment spans residues 1–98; sequence MVLRSGICGL…FPVLGIDYTH (98 aa). O-linked (GalNAc...) threonine glycosylation occurs at threonine 42. The tract at residues 42 to 79 is disordered; sequence TASTIRSSEPPRERSIGDVTTAPPEVTPESRPVNHSVT. Serine 56 carries an O-linked (GalNAc...) serine glycan. O-linked (GalNAc...) threonine glycans are attached at residues threonine 61, threonine 62, and threonine 68. A glycan (N-linked (GlcNAc...) asparagine) is linked at asparagine 75. Residues 99-121 traverse the membrane as a helical segment; it reads VRTPFEISLWILLACLMKIGFHV. The Cytoplasmic segment spans residues 122 to 130; it reads IPTISSIVP. The chain crosses the membrane as a helical span at residues 131 to 148; that stretch reads ESCLLIVVGLLVGGLIKG. At 149–158 the chain is on the extracellular side; the sequence is VGETPPFLQS. Residues 159–176 traverse the membrane as a helical segment; sequence DVFFLFLLPPIILDAGYF. The Cytoplasmic segment spans residues 177–186; the sequence is LPLRQFTENL. The helical transmembrane segment at 187-215 threads the bilayer; it reads GTILIFAVVGTLWNAFFLGGLMYAVCLVG. Topologically, residues 216–222 are extracellular; it reads GEQINNI. Residues 223 to 249 form a helical membrane-spanning segment; sequence GLLDNLLFGSIISAVDPVAVLAVFEEI. Topologically, residues 250-252 are cytoplasmic; it reads HIN. Residues 253-283 form a helical membrane-spanning segment; it reads ELLHILVFGESLLNDAVTVVLYHLFEEFANY. Over 284–287 the chain is Extracellular; that stretch reads EHVG. The helical transmembrane segment at 288–322 threads the bilayer; it reads IVDIFLGFLSFFVVALGGVLVGVVYGVIAAFTSRF. Over 323-328 the chain is Cytoplasmic; sequence TSHIRV. The helical transmembrane segment at 329-341 threads the bilayer; it reads IEPLFVFLYSYMA. The Extracellular segment spans residues 342 to 350; that stretch reads YLSAELFHL. Residues 351-371 form a helical membrane-spanning segment; it reads SGIMALIASGVVMRPYVEANI. Residues 372 to 373 are Cytoplasmic-facing; that stretch reads SH. A helical membrane pass occupies residues 374–404; it reads KSHTTIKYFLKMWSSVSETLIFIFLGVSTVA. Residues 405–410 are Extracellular-facing; the sequence is GSHHWN. The helical transmembrane segment at 411–438 threads the bilayer; it reads WTFVISTLLFCLIARVLGVLGLTWFINK. Residues 439–444 lie on the Cytoplasmic side of the membrane; the sequence is FRIVKL. The chain crosses the membrane as a helical span at residues 445–469; it reads TPKDQFIIAYGGLRGAIAFSLGYLL. Residues 470–475 lie on the Extracellular side of the membrane; that stretch reads DKKHFP. The helical transmembrane segment at 476–505 threads the bilayer; it reads MCDLFLTAIITVIFFTVFVQGMTIRPLVDL. Positions 503-545 are interaction with TESC; it reads VDLLAVKKKQETKRSINEEIHTQFLDHLLTGIEDICGHYGHHH. The Cytoplasmic portion of the chain corresponds to 506–815; the sequence is LAVKKKQETK…EGEPFFPKGQ (310 aa). The tract at residues 509–516 is PI(4,5)P2-binding region; that stretch reads KKKQETKR. The interaction with CHP2 stretch occupies residues 515-545; that stretch reads KRSINEEIHTQFLDHLLTGIEDICGHYGHHH. Positions 540–545 are confers pH-dependent PI(4,5)P2 binding; it reads HYGHHH. A PI(4,5)P2-binding region region spans residues 552–560; that stretch reads RFNKKYVKK. Residues serine 599 and serine 602 each carry the phosphoserine modification. Threonine 603 bears the Phosphothreonine mark. Phosphoserine occurs at positions 605 and 648. The interval 633-815 is interaction with TESC; it reads KILRNNLQKT…EGEPFFPKGQ (183 aa). The interval 633–815 is interaction with CALM1; sequence KILRNNLQKT…EGEPFFPKGQ (183 aa). The interaction with PPP3CA stretch occupies residues 684 to 687; that stretch reads LTVP. 3 positions are modified to phosphoserine: serine 693, serine 697, and serine 703. The tract at residues 715–720 is interaction with PPP3CA; sequence PVITID. 3 positions are modified to phosphoserine: serine 723, serine 726, and serine 729. The interval 744-815 is disordered; sequence LSRDPAKVAE…EGEPFFPKGQ (72 aa). Residue threonine 779 is modified to Phosphothreonine. Polar residues predominate over residues 782-791; sequence PSDSPSSQRI. Phosphoserine is present on residues serine 785, serine 787, and serine 796.

This sequence belongs to the monovalent cation:proton antiporter 1 (CPA1) transporter (TC 2.A.36) family. Homodimer; dimerization is crucial for its function. Oligomer. Interacts with CALM1 in a calcium-dependent manner. Interacts with TESC. Interacts (via the C-terminal domain) with CHP1; the interaction occurs at the plasma membrane in a calcium-dependent manner and facilitates the maturation, cell surface expression, and function of SLC9A3. Interacts with CHP2; the interaction occurs in a calcium-dependent manner. Interacts with EZR; regulates the cytoskeletal interactions of SLC9A1 and promotes stress fiber formation. O-glycosylated. In terms of processing, ubiquitinated, leading to its degradation by the proteasome. Ubiquitination is reduced by CHP1. Post-translationally, phosphorylation at Thr-779 increases SLC9A1 activity. Specifically dephosphorylated at Thr-779 by PPP3CA that negatively regulates SLC9A1 activity. Phosphorylation at Ser-648 by AKT1 reduces SLC9A1 binding to CALM1. Palmitoylated; may play a major role in SLC9A1 regulation. As to expression, kidney and intestine.

Its subcellular location is the cell membrane. The protein localises to the basolateral cell membrane. The enzyme catalyses Na(+)(in) + H(+)(out) = Na(+)(out) + H(+)(in). It carries out the reaction Li(+)(out) + H(+)(in) = Li(+)(in) + H(+)(out). The catalysed reaction is Li(+)(in) + Na(+)(out) = Li(+)(out) + Na(+)(in). Its activity is regulated as follows. Activated at acidic pHs. Inhibited by amiloride and 5-amino-substituted derivatives. Inhibited by cariporide and eniporide. Phosphatidylinositol 4,5-bisphosphate (PI(4,5)P2) and phosphatidylinositol 3,4,5-trisphosphate (PI(3,4,5)P3) bind and differentially regulate SLC9A1 activity. Electroneutral Na(+) /H(+) antiporter that extrudes Na(+) in exchange for external protons driven by the inward sodium ion chemical gradient, protecting cells from acidification that occurs from metabolism. Exchanges intracellular H(+) ions for extracellular Na(+) in 1:1 stoichiometry. Plays a key role in maintening intracellular pH neutral and cell volume, and thus is important for cell growth, proliferation, migration and survival. In addition, can transport lithium Li(+) and also functions as a Na(+)/Li(+) antiporter. SLC9A1 also functions in membrane anchoring and organization of scaffolding complexes that coordinate signaling inputs. In Homo sapiens (Human), this protein is Sodium/hydrogen exchanger 1.